We begin with the raw amino-acid sequence, 174 residues long: Co-chaperone protein HscB homolog (174 aa).

A J domain is found at 2 to 74 (NYFELFKFSP…IRRAEHMLSL (73 aa)).

Belongs to the HscB family. In terms of assembly, interacts with HscA and stimulates its ATPase activity.

In terms of biological role, co-chaperone involved in the maturation of iron-sulfur cluster-containing proteins. Seems to help targeting proteins to be folded toward HscA. The sequence is that of Co-chaperone protein HscB homolog from Shewanella baltica (strain OS155 / ATCC BAA-1091).